A 532-amino-acid polypeptide reads, in one-letter code: Germ cell nuclear acidic-1 protein (532 aa).

Basic and acidic residues predominate over residues 1–10 (MPTPFRDLHN). Disordered stretches follow at residues 1–50 (MPTP…EPIS), 84–181 (REAP…GNFE), and 213–253 (YISE…DRKQ). The span at 14 to 32 (ASASSYETAWSSSFSSRRS) shows a compositional bias: low complexity. Composition is skewed to basic and acidic residues over residues 39 to 48 (SNLKEIKDEP), 94 to 107 (LLQK…RDML), and 124 to 133 (KPKEVKKALK). Over residues 213–235 (YISEESSEEESEEEEEDVDDEEY) the composition is skewed to acidic residues. The span at 236–251 (RESSPEVEAKISYSDR) shows a compositional bias: basic and acidic residues. The region spanning 308-398 (RRIFSAIPSE…GARCSSVFKS (91 aa)) is the SprT-like domain. The tract at residues 468-489 (AKPVGPILSNSSKPSPPAPRRI) is disordered.

This sequence belongs to the serine-aspartate repeat-containing protein (SDr) family. As to quaternary structure, interacts with top-2; this interaction allows the resolution of topoisomerase II (top-2) DNA-protein cross-links. In terms of tissue distribution, mainly expressed in germ cells and early embryonic, proliferating cells.

It is found in the chromosome. May play a role in DNA-protein cross-links (DPCs) clearance through a SUMO-dependent recruitment to sites of DPCs, ensuring the genomic stability by protecting germ cells and early embryos from various sources of damage. May resolve the topoisomerase II (top-2) DPCs. Limits replication stress and DNA double-strand breaks. The sequence is that of Germ cell nuclear acidic-1 protein from Caenorhabditis elegans.